A 391-amino-acid polypeptide reads, in one-letter code: Beta sliding clamp (391 aa).

It belongs to the beta sliding clamp family. Forms a ring-shaped head-to-tail homodimer around DNA which binds and tethers DNA polymerases and other proteins to the DNA. The DNA replisome complex has a single clamp-loading complex (3 tau and 1 each of delta, delta', psi and chi subunits) which binds 3 Pol III cores (1 core on the leading strand and 2 on the lagging strand) each with a beta sliding clamp dimer. Additional proteins in the replisome are other copies of gamma, psi and chi, Ssb, DNA helicase and RNA primase.

The protein localises to the cytoplasm. Functionally, confers DNA tethering and processivity to DNA polymerases and other proteins. Acts as a clamp, forming a ring around DNA (a reaction catalyzed by the clamp-loading complex) which diffuses in an ATP-independent manner freely and bidirectionally along dsDNA. Initially characterized for its ability to contact the catalytic subunit of DNA polymerase III (Pol III), a complex, multichain enzyme responsible for most of the replicative synthesis in bacteria; Pol III exhibits 3'-5' exonuclease proofreading activity. The beta chain is required for initiation of replication as well as for processivity of DNA replication. The polypeptide is Beta sliding clamp (dnaN) (Synechocystis sp. (strain ATCC 27184 / PCC 6803 / Kazusa)).